The chain runs to 434 residues: Cytochrome c biogenesis protein CcsB (434 aa).

3 helical membrane-spanning segments follow: residues 15 to 35 (LRVA…GTAI), 73 to 93 (SNWF…CSLR), and 163 to 183 (VGPL…VVGA).

The protein belongs to the Ccs1/CcsB family. In terms of assembly, may interact with CcsA.

The protein resides in the cellular thylakoid membrane. In terms of biological role, required during biogenesis of c-type cytochromes (cytochrome c6 and cytochrome f) at the step of heme attachment. The sequence is that of Cytochrome c biogenesis protein CcsB from Synechococcus sp. (strain RCC307).